A 468-amino-acid chain; its full sequence is MVFTALDPLGVPLGTAQASFGTDGIRGRVGTLLTPAFILQVGYWCGQVLPDQGPVLIGMDSRSSGAMVASALTAGLTAAGREVWTLGLCPTPAVPGLIRKLGAAGGLMVSASHNPPEDNGIKVFGADGAKLSPAKQGLIEAGLRGEAIGDKGRPTITSCGPAYQRDELLSHYRDALLASVLHQRLDGVPIVLDLCWGAATACGAEVFAALGADLTVLHGEPDGSRINVGCGSTQLEPLRRAVIERGAIMGFAFDGDADRMLALDGQGRVVDGDHVLYLWGSDLQDQQALPQQRLVATVMSNLGFERAWQQRGGVLERTPVGDQHVYAAMVESNAALGGEQSGHILSAAHGLCGDGVLTALQLATLCHGRGLSLGEWLDQSFQAFPQKLVNVRVPDLERRMGWQHCEPLQEAVLAAEAAMGEDGRVLVRASGTEPLLRVMIEASDSAAVEFWTVQLADLAEQHLNRGCV.

S112 serves as the catalytic Phosphoserine intermediate. 4 residues coordinate Mg(2+): S112, D254, D256, and D258. Phosphoserine is present on S112.

It belongs to the phosphohexose mutase family. Mg(2+) is required as a cofactor. Activated by phosphorylation.

It catalyses the reaction alpha-D-glucosamine 1-phosphate = D-glucosamine 6-phosphate. Its function is as follows. Catalyzes the conversion of glucosamine-6-phosphate to glucosamine-1-phosphate. The chain is Phosphoglucosamine mutase from Prochlorococcus marinus (strain MIT 9303).